The following is a 692-amino-acid chain: Protein arginine N-methyltransferase 7 (692 aa).

SAM-dependent MTase PRMT-type domains lie at 14–359 (ENSW…YSLW) and 368–692 (AKTV…QEKR).

This sequence belongs to the class I-like SAM-binding methyltransferase superfamily. Protein arginine N-methyltransferase family. PRMT7 subfamily.

In terms of biological role, essential arginine methyltransferase that can both catalyze the formation of omega-N monomethylarginine (MMA) and symmetrical dimethylarginine (sDMA). Specifically mediates the symmetrical dimethylation of arginine residues in the small nuclear ribonucleoproteins SmD1 and SmD3. The chain is Protein arginine N-methyltransferase 7 (Art7) from Drosophila pseudoobscura pseudoobscura (Fruit fly).